A 41-amino-acid polypeptide reads, in one-letter code: MFMPASKPDLGKKGRLLKMEIESLDYFAAICTDYFVRKGGS.

This is an uncharacterized protein from Archaeoglobus fulgidus (strain ATCC 49558 / DSM 4304 / JCM 9628 / NBRC 100126 / VC-16).